Here is a 149-residue protein sequence, read N- to C-terminus: Large ribosomal subunit protein bL9 (149 aa).

It belongs to the bacterial ribosomal protein bL9 family.

In terms of biological role, binds to the 23S rRNA. This chain is Large ribosomal subunit protein bL9, found in Alkaliphilus metalliredigens (strain QYMF).